The following is a 127-amino-acid chain: Small ribosomal subunit protein uS13 (127 aa).

The segment at 90–127 (RRHRQGLPVRGQRTRTNARTRRGRRLTVAGKKKTPAKK) is disordered. Residues 101–127 (QRTRTNARTRRGRRLTVAGKKKTPAKK) show a composition bias toward basic residues.

Belongs to the universal ribosomal protein uS13 family. As to quaternary structure, part of the 30S ribosomal subunit. Forms a loose heterodimer with protein S19. Forms two bridges to the 50S subunit in the 70S ribosome.

Located at the top of the head of the 30S subunit, it contacts several helices of the 16S rRNA. In the 70S ribosome it contacts the 23S rRNA (bridge B1a) and protein L5 of the 50S subunit (bridge B1b), connecting the 2 subunits; these bridges are implicated in subunit movement. Contacts the tRNAs in the A and P-sites. The protein is Small ribosomal subunit protein uS13 of Synechocystis sp. (strain ATCC 27184 / PCC 6803 / Kazusa).